The sequence spans 740 residues: MSDSCPVAHDGNTASTSESENPAIPSPTPTGNRPRTNRDWWPNQPDLSVLHAHSSKSNPMGADFDYAQEFAKLDVEALKRDVIALMTASQDWWPADYGHYGGLFVRMSWHAAGTYRIADGRGGGGQGAQRFAPLNSWPDNASLDKARRLLWPVKQKYGKQVSWADLLVFAGNCALESMGFTTFGFGFGREDIWEPEEIYWGPEDTWLGDERYSGDRELSGPLGAVQMGLIYVNPEGPNGQPDPVAAARDIRETFARMAMNDVETAALIAGGHTFGKTHGAGPADLVGPEPEGAPVEQQGLGWKSAFGTGVGKDAITSGLEVVWTPTPTKWDNTFLEILYGYDWELTKSPAGAWQWIPKDGAGAGTIPDPFDSSAGRTPTMLTTDLSLRLDPTYEKITRRWLDHPEEFAEEFAKAWYKLLHRDMGPVTRYLGPWVPEPQLWQDPVPSADDQLIGDADIAILKSRLLDSGLSVSQLVSTAWASAASFRSTDMRGGANGARIRLEPQKNWEVNEPATLSAVLQTLERVQQEFNQAGGAKVSLADLIVLGGTAAVEQAAKNAGQDITVSFTPGRTDATQEQTDVDSFEVLEPRADGFRNYLKGGEKIPAEILLVDRAYMLSLTPPEVTVLVGGLRALNANFGKTGHGVFTDRPETLTNDFFVNLLDMGTEWKPSKTEENVYDGVDRATGDPKYTATAVDLVFGSNSQLRALSEVYASEDAKQKFAEDFAAAWTKVMDLDRFDVN.

A disordered region spans residues 1-44; sequence MSDSCPVAHDGNTASTSESENPAIPSPTPTGNRPRTNRDWWPNQ. The segment at residues 109–231 is a cross-link (tryptophyl-tyrosyl-methioninium (Trp-Tyr) (with M-257)); sequence WHAAGTYRIA…LGAVQMGLIY (123 aa). Catalysis depends on His110, which acts as the Proton acceptor. Residues 231–257 constitute a cross-link (tryptophyl-tyrosyl-methioninium (Tyr-Met) (with W-109)); that stretch reads YVNPEGPNGQPDPVAAARDIRETFARM. Position 272 (His272) interacts with heme b.

The protein belongs to the peroxidase family. Peroxidase/catalase subfamily. As to quaternary structure, homodimer or homotetramer. Heme b serves as cofactor. In terms of processing, formation of the three residue Trp-Tyr-Met cross-link is important for the catalase, but not the peroxidase activity of the enzyme.

It catalyses the reaction H2O2 + AH2 = A + 2 H2O. It carries out the reaction 2 H2O2 = O2 + 2 H2O. Its function is as follows. Bifunctional enzyme with both catalase and broad-spectrum peroxidase activity. The protein is Catalase-peroxidase of Rhodococcus erythropolis (strain PR4 / NBRC 100887).